Here is a 295-residue protein sequence, read N- to C-terminus: Pyridoxal 5'-phosphate synthase subunit PdxS (295 aa).

Asp-25 provides a ligand contact to D-ribose 5-phosphate. Lys-82 (schiff-base intermediate with D-ribose 5-phosphate) is an active-site residue. Position 154 (Gly-154) interacts with D-ribose 5-phosphate. Arg-166 contributes to the D-glyceraldehyde 3-phosphate binding site. D-ribose 5-phosphate-binding positions include Gly-215 and 236–237; that span reads GS.

This sequence belongs to the PdxS/SNZ family. In terms of assembly, in the presence of PdxT, forms a dodecamer of heterodimers.

The enzyme catalyses aldehydo-D-ribose 5-phosphate + D-glyceraldehyde 3-phosphate + L-glutamine = pyridoxal 5'-phosphate + L-glutamate + phosphate + 3 H2O + H(+). The protein operates within cofactor biosynthesis; pyridoxal 5'-phosphate biosynthesis. Functionally, catalyzes the formation of pyridoxal 5'-phosphate from ribose 5-phosphate (RBP), glyceraldehyde 3-phosphate (G3P) and ammonia. The ammonia is provided by the PdxT subunit. Can also use ribulose 5-phosphate and dihydroxyacetone phosphate as substrates, resulting from enzyme-catalyzed isomerization of RBP and G3P, respectively. This chain is Pyridoxal 5'-phosphate synthase subunit PdxS, found in Shouchella clausii (strain KSM-K16) (Alkalihalobacillus clausii).